Consider the following 157-residue polypeptide: Endoribonuclease YbeY (157 aa).

Zn(2+) contacts are provided by His114, His118, and His124.

Belongs to the endoribonuclease YbeY family. Zn(2+) serves as cofactor.

The protein resides in the cytoplasm. Functionally, single strand-specific metallo-endoribonuclease involved in late-stage 70S ribosome quality control and in maturation of the 3' terminus of the 16S rRNA. This chain is Endoribonuclease YbeY, found in Yersinia pseudotuberculosis serotype O:1b (strain IP 31758).